Consider the following 209-residue polypeptide: Uracil phosphoribosyltransferase (209 aa).

Residues arginine 79, arginine 104, and 131–139 (DPMLATGGS) each bind 5-phospho-alpha-D-ribose 1-diphosphate. Uracil contacts are provided by residues isoleucine 194 and 199–201 (GDA). Residue aspartate 200 coordinates 5-phospho-alpha-D-ribose 1-diphosphate.

This sequence belongs to the UPRTase family. Mg(2+) serves as cofactor.

It carries out the reaction UMP + diphosphate = 5-phospho-alpha-D-ribose 1-diphosphate + uracil. The protein operates within pyrimidine metabolism; UMP biosynthesis via salvage pathway; UMP from uracil: step 1/1. With respect to regulation, allosterically activated by GTP. Its function is as follows. Catalyzes the conversion of uracil and 5-phospho-alpha-D-ribose 1-diphosphate (PRPP) to UMP and diphosphate. The protein is Uracil phosphoribosyltransferase of Streptococcus agalactiae serotype III (strain NEM316).